Here is an 833-residue protein sequence, read N- to C-terminus: Coiled-coil domain-containing protein 110 (833 aa).

Residues 431 to 778 (LQNYLKESVQ…REYLNLSDKI (348 aa)) adopt a coiled-coil conformation.

The protein localises to the nucleus. This chain is Coiled-coil domain-containing protein 110 (CCDC110), found in Macaca fascicularis (Crab-eating macaque).